Reading from the N-terminus, the 393-residue chain is Protein TsgA (393 aa).

12 helical membrane-spanning segments follow: residues 11–31, 51–71, 78–98, 101–121, 134–154, 162–182, 206–226, 245–265, 273–293, 297–317, 332–352, and 361–381; these read WISF…GMVM, FLNA…EIVP, FGFL…SLAL, TAMF…TFLI, LLFT…IAAF, WYWV…LTFG, IGVL…LGFI, TLVS…SFIL, ILTV…TGTP, AWSI…IITL, FVLT…GPIV, and LLTA…LGFV.

The protein belongs to the major facilitator superfamily. TsgA family.

Its subcellular location is the cell inner membrane. The sequence is that of Protein TsgA from Shigella boydii serotype 4 (strain Sb227).